The chain runs to 273 residues: Thiazole synthase (273 aa).

The active-site Schiff-base intermediate with DXP is the lysine 113. Residues glycine 174, 201-202, and 223-224 contribute to the 1-deoxy-D-xylulose 5-phosphate site; these read AG and NT.

Belongs to the ThiG family. In terms of assembly, homotetramer. Forms heterodimers with either ThiH or ThiS.

It localises to the cytoplasm. The catalysed reaction is [ThiS sulfur-carrier protein]-C-terminal-Gly-aminoethanethioate + 2-iminoacetate + 1-deoxy-D-xylulose 5-phosphate = [ThiS sulfur-carrier protein]-C-terminal Gly-Gly + 2-[(2R,5Z)-2-carboxy-4-methylthiazol-5(2H)-ylidene]ethyl phosphate + 2 H2O + H(+). The protein operates within cofactor biosynthesis; thiamine diphosphate biosynthesis. In terms of biological role, catalyzes the rearrangement of 1-deoxy-D-xylulose 5-phosphate (DXP) to produce the thiazole phosphate moiety of thiamine. Sulfur is provided by the thiocarboxylate moiety of the carrier protein ThiS. In vitro, sulfur can be provided by H(2)S. This chain is Thiazole synthase, found in Salinibacter ruber (strain DSM 13855 / M31).